We begin with the raw amino-acid sequence, 417 residues long: 4-hydroxy-3-methylbut-2-en-1-yl diphosphate synthase (flavodoxin) (417 aa).

Residues Cys-304, Cys-307, Cys-350, and Glu-357 each contribute to the [4Fe-4S] cluster site.

The protein belongs to the IspG family. Requires [4Fe-4S] cluster as cofactor.

It catalyses the reaction (2E)-4-hydroxy-3-methylbut-2-enyl diphosphate + oxidized [flavodoxin] + H2O + 2 H(+) = 2-C-methyl-D-erythritol 2,4-cyclic diphosphate + reduced [flavodoxin]. The protein operates within isoprenoid biosynthesis; isopentenyl diphosphate biosynthesis via DXP pathway; isopentenyl diphosphate from 1-deoxy-D-xylulose 5-phosphate: step 5/6. Functionally, converts 2C-methyl-D-erythritol 2,4-cyclodiphosphate (ME-2,4cPP) into 1-hydroxy-2-methyl-2-(E)-butenyl 4-diphosphate. This Rhizobium rhizogenes (strain K84 / ATCC BAA-868) (Agrobacterium radiobacter) protein is 4-hydroxy-3-methylbut-2-en-1-yl diphosphate synthase (flavodoxin).